The chain runs to 159 residues: Transcriptional repressor NrdR (159 aa).

A zinc finger lies at Cys-3–Cys-34. One can recognise an ATP-cone domain in the interval Pro-49–Asp-139.

The protein belongs to the NrdR family. Zn(2+) serves as cofactor.

Its function is as follows. Negatively regulates transcription of bacterial ribonucleotide reductase nrd genes and operons by binding to NrdR-boxes. The polypeptide is Transcriptional repressor NrdR (Nitrosospira multiformis (strain ATCC 25196 / NCIMB 11849 / C 71)).